Consider the following 398-residue polypeptide: Arginine biosynthesis bifunctional protein ArgJ (398 aa).

6 residues coordinate substrate: Thr148, Lys174, Thr185, Glu271, Asn393, and Thr398. Catalysis depends on Thr185, which acts as the Nucleophile.

It belongs to the ArgJ family. In terms of assembly, heterotetramer of two alpha and two beta chains.

The protein resides in the cytoplasm. It catalyses the reaction N(2)-acetyl-L-ornithine + L-glutamate = N-acetyl-L-glutamate + L-ornithine. It carries out the reaction L-glutamate + acetyl-CoA = N-acetyl-L-glutamate + CoA + H(+). It functions in the pathway amino-acid biosynthesis; L-arginine biosynthesis; L-ornithine and N-acetyl-L-glutamate from L-glutamate and N(2)-acetyl-L-ornithine (cyclic): step 1/1. It participates in amino-acid biosynthesis; L-arginine biosynthesis; N(2)-acetyl-L-ornithine from L-glutamate: step 1/4. Functionally, catalyzes two activities which are involved in the cyclic version of arginine biosynthesis: the synthesis of N-acetylglutamate from glutamate and acetyl-CoA as the acetyl donor, and of ornithine by transacetylation between N(2)-acetylornithine and glutamate. The chain is Arginine biosynthesis bifunctional protein ArgJ from Listeria monocytogenes serovar 1/2a (strain ATCC BAA-679 / EGD-e).